A 201-amino-acid chain; its full sequence is Proteasome subunit beta 1 (201 aa).

A propeptide (removed in mature form; by autocatalysis) is located at residue Met1. Thr2 (nucleophile) is an active-site residue.

Belongs to the peptidase T1B family. The 20S proteasome core is composed of 14 alpha and 14 beta subunits that assemble into four stacked heptameric rings, resulting in a barrel-shaped structure. The two inner rings, each composed of seven catalytic beta subunits, are sandwiched by two outer rings, each composed of seven alpha subunits. The catalytic chamber with the active sites is on the inside of the barrel. Has a gated structure, the ends of the cylinder being occluded by the N-termini of the alpha-subunits. Is capped at one or both ends by the proteasome regulatory ATPase, PAN.

The protein resides in the cytoplasm. It catalyses the reaction Cleavage of peptide bonds with very broad specificity.. With respect to regulation, the formation of the proteasomal ATPase PAN-20S proteasome complex, via the docking of the C-termini of PAN into the intersubunit pockets in the alpha-rings, triggers opening of the gate for substrate entry. Interconversion between the open-gate and close-gate conformations leads to a dynamic regulation of the 20S proteasome proteolysis activity. Functionally, component of the proteasome core, a large protease complex with broad specificity involved in protein degradation. The chain is Proteasome subunit beta 1 from Pyrobaculum neutrophilum (strain DSM 2338 / JCM 9278 / NBRC 100436 / V24Sta) (Thermoproteus neutrophilus).